The primary structure comprises 228 residues: Sensory transduction protein RegX3 (228 aa).

Residues 3-116 (SVLIVEDEES…ELIARIRAVL (114 aa)) form the Response regulatory domain. Aspartate 52 bears the 4-aspartylphosphate mark. Positions 129–228 (DGVLEAGPVR…VRGLGYKLEG (100 aa)) form a DNA-binding region, ompR/PhoB-type.

In terms of processing, phosphorylated by SenX3.

In terms of biological role, member of the two-component regulatory system SenX3/RegX3 involved in stress response. The system is involved in phosphate starvation response. Once phosphorylated by SenX3, activates the expression of the alkaline phosphatase phoA, the high-affinity phosphate transporter pstSCAB, phnDCE, phnF and senX3. May act as a negative regulator of NhaA. Acts by binding to a DNA motif consisting of an inverted repeat. The chain is Sensory transduction protein RegX3 from Mycolicibacterium smegmatis (strain ATCC 700084 / mc(2)155) (Mycobacterium smegmatis).